We begin with the raw amino-acid sequence, 349 residues long: DNA-directed RNA polymerase subunit alpha (349 aa).

The alpha N-terminal domain (alpha-NTD) stretch occupies residues 1-226 (MLIAQRPTLV…GLFGLAQELN (226 aa)). Positions 241–349 (AALAADLALP…GAEFVETEQY (109 aa)) are alpha C-terminal domain (alpha-CTD). A disordered region spans residues 308-349 (LKDSPPGFDPRQAVDTYGTDSYNPAFSDPSDDGAEFVETEQY). The span at 336–349 (PSDDGAEFVETEQY) shows a compositional bias: acidic residues.

This sequence belongs to the RNA polymerase alpha chain family. As to quaternary structure, homodimer. The RNAP catalytic core consists of 2 alpha, 1 beta, 1 beta' and 1 omega subunit. When a sigma factor is associated with the core the holoenzyme is formed, which can initiate transcription.

The enzyme catalyses RNA(n) + a ribonucleoside 5'-triphosphate = RNA(n+1) + diphosphate. DNA-dependent RNA polymerase catalyzes the transcription of DNA into RNA using the four ribonucleoside triphosphates as substrates. The sequence is that of DNA-directed RNA polymerase subunit alpha from Frankia alni (strain DSM 45986 / CECT 9034 / ACN14a).